The primary structure comprises 79 residues: Hematopoietic cell signal transducer (79 aa).

An N-terminal signal peptide occupies residues 1 to 18; it reads MIHPGHILFLLLLPVAAA. The Extracellular portion of the chain corresponds to 19–34; the sequence is QTTPGSCSGCGSLSLP. Residues 35–55 traverse the membrane as a helical segment; sequence LLAGLVAADAVASPLIVGAVF. The Cytoplasmic portion of the chain corresponds to 56 to 79; that stretch reads LCARPRRSPAQGDGKVYINMPGRG. Tyr-72 bears the Phosphotyrosine mark. The tract at residues 72–74 is GRB2 binding site; the sequence is YIN. A PIK3R1 binding site region spans residues 72 to 75; that stretch reads YINM.

It belongs to the DAP10 family. As to quaternary structure, homodimer; Disulfide-linked. Heterohexamer composed of four subunits of HCST/DAP10 and two subunits of KLRK1. Interacts (via transmembrane domain) with KLRK1 (via transmembrane domain); the interaction is required for KLRK1 NK cell surface and induces NK cell-mediated cytotoxicity. Interacts with PIK3R1 and GRB2. Interacts with CLEC5A. Forms an CLEC5A/TYROBP/HCST trimolecular complex depending almost solely on TYROBP. Interacts with CD300H. Post-translationally, phosphorylated; PIK3R1 and GRB2 associate specifically with tyrosine-phosphorylated HCST. In terms of processing, O-glycosylated.

The protein localises to the membrane. Functionally, transmembrane adapter protein which associates with KLRK1 to form an activation receptor KLRK1-HCST in lymphoid and myeloid cells; this receptor plays a major role in triggering cytotoxicity against target cells expressing cell surface ligands such as MHC class I chain-related MICA and MICB, and UL16-binding proteins (ULBPs); these ligands are up-regulated by stress conditions and pathological state such as viral infection and tumor transformation. Functions as a docking site for PI3-kinase PIK3R1 and GRB2. Interaction of ULBPs with KLRK1-HCST triggers calcium mobilization and activation of the PIK3R1, MAP2K/ERK, and JAK2/STAT5 signaling pathways. Both PIK3R1 and GRB2 are required for full KLRK1-HCST-mediated activation and ultimate killing of target cells. In NK cells, KLRK1-HCST signaling directly induces cytotoxicity and enhances cytokine production initiated via DAP12/TYROBP-associated receptors. In T-cells, it provides primarily costimulation for TCR-induced signals. KLRK1-HCST receptor plays a role in immune surveillance against tumors and is required for cytolysis of tumors cells; indeed, melanoma cells that do not express KLRK1 ligands escape from immune surveillance mediated by NK cells. The polypeptide is Hematopoietic cell signal transducer (HCST) (Macaca mulatta (Rhesus macaque)).